A 130-amino-acid polypeptide reads, in one-letter code: Small ribosomal subunit protein uS9 (130 aa).

This sequence belongs to the universal ribosomal protein uS9 family.

The sequence is that of Small ribosomal subunit protein uS9 from Bacillus thuringiensis subsp. konkukian (strain 97-27).